Here is a 33-residue protein sequence, read N- to C-terminus: Brevinin-2HSa (33 aa).

A disulfide bond links C27 and C33.

Expressed by the skin glands.

The protein resides in the secreted. Has antibacterial activity against the Gram-positive bacterium S.aureus ATCC 25923 (MIC=18 uM) and the Gram-negative bacterium E.coli ATCC 25726 (MIC=36 uM). The sequence is that of Brevinin-2HSa from Odorrana hosii (Hose's rock frog).